Reading from the N-terminus, the 101-residue chain is Small ribosomal subunit protein uS14 (101 aa).

The protein belongs to the universal ribosomal protein uS14 family. Part of the 30S ribosomal subunit. Contacts proteins S3 and S10.

Functionally, binds 16S rRNA, required for the assembly of 30S particles and may also be responsible for determining the conformation of the 16S rRNA at the A site. This Shewanella sediminis (strain HAW-EB3) protein is Small ribosomal subunit protein uS14.